The sequence spans 171 residues: Co-chaperone protein HscB (171 aa).

In terms of domain architecture, J spans 2–74 (DYFTLFGLPA…LTRAEYLLSL (73 aa)).

Belongs to the HscB family. In terms of assembly, interacts with HscA and stimulates its ATPase activity. Interacts with IscU.

Functionally, co-chaperone involved in the maturation of iron-sulfur cluster-containing proteins. Seems to help targeting proteins to be folded toward HscA. This chain is Co-chaperone protein HscB, found in Salmonella choleraesuis (strain SC-B67).